The chain runs to 688 residues: DNA-directed RNA polymerase subunit beta' (688 aa).

Cys-69, Cys-71, Cys-87, and Cys-90 together coordinate Zn(2+). Asp-497, Asp-499, and Asp-501 together coordinate Mg(2+).

It belongs to the RNA polymerase beta' chain family. RpoC1 subfamily. In terms of assembly, in plastids the minimal PEP RNA polymerase catalytic core is composed of four subunits: alpha, beta, beta', and beta''. When a (nuclear-encoded) sigma factor is associated with the core the holoenzyme is formed, which can initiate transcription. Mg(2+) serves as cofactor. Zn(2+) is required as a cofactor.

It localises to the plastid. Its subcellular location is the chloroplast. It carries out the reaction RNA(n) + a ribonucleoside 5'-triphosphate = RNA(n+1) + diphosphate. In terms of biological role, DNA-dependent RNA polymerase catalyzes the transcription of DNA into RNA using the four ribonucleoside triphosphates as substrates. The protein is DNA-directed RNA polymerase subunit beta' of Sinapis alba (White mustard).